The sequence spans 362 residues: tRNA-specific 2-thiouridylase MnmA 1 (362 aa).

Residues 29 to 36 (AMSGGVDS) and methionine 55 each bind ATP. The Nucleophile role is filled by cysteine 109. Cysteine 109 and cysteine 201 are joined by a disulfide. Glycine 133 contributes to the ATP binding site. Residues 151 to 153 (KDQ) form an interaction with tRNA region. Cysteine 201 acts as the Cysteine persulfide intermediate in catalysis.

This sequence belongs to the MnmA/TRMU family.

Its subcellular location is the cytoplasm. The enzyme catalyses S-sulfanyl-L-cysteinyl-[protein] + uridine(34) in tRNA + AH2 + ATP = 2-thiouridine(34) in tRNA + L-cysteinyl-[protein] + A + AMP + diphosphate + H(+). Catalyzes the 2-thiolation of uridine at the wobble position (U34) of tRNA, leading to the formation of s(2)U34. This chain is tRNA-specific 2-thiouridylase MnmA 1, found in Fusobacterium nucleatum subsp. nucleatum (strain ATCC 25586 / DSM 15643 / BCRC 10681 / CIP 101130 / JCM 8532 / KCTC 2640 / LMG 13131 / VPI 4355).